The following is a 330-amino-acid chain: Aspartate--ammonia ligase (330 aa).

The protein belongs to the class-II aminoacyl-tRNA synthetase family. AsnA subfamily.

The protein localises to the cytoplasm. It carries out the reaction L-aspartate + NH4(+) + ATP = L-asparagine + AMP + diphosphate + H(+). Its pathway is amino-acid biosynthesis; L-asparagine biosynthesis; L-asparagine from L-aspartate (ammonia route): step 1/1. The protein is Aspartate--ammonia ligase of Streptococcus uberis (strain ATCC BAA-854 / 0140J).